The primary structure comprises 217 residues: 3,4-dihydroxy-2-butanone 4-phosphate synthase (217 aa).

D-ribulose 5-phosphate-binding positions include Arg-37–Glu-38, Asp-42, Arg-150–Thr-154, and Glu-174. Glu-38 serves as a coordination point for Mg(2+). Residue His-153 coordinates Mg(2+).

This sequence belongs to the DHBP synthase family. In terms of assembly, homodimer. Mg(2+) serves as cofactor. Mn(2+) is required as a cofactor.

The enzyme catalyses D-ribulose 5-phosphate = (2S)-2-hydroxy-3-oxobutyl phosphate + formate + H(+). The protein operates within cofactor biosynthesis; riboflavin biosynthesis; 2-hydroxy-3-oxobutyl phosphate from D-ribulose 5-phosphate: step 1/1. Functionally, catalyzes the conversion of D-ribulose 5-phosphate to formate and 3,4-dihydroxy-2-butanone 4-phosphate. This Escherichia coli O17:K52:H18 (strain UMN026 / ExPEC) protein is 3,4-dihydroxy-2-butanone 4-phosphate synthase.